The following is a 314-amino-acid chain: Deoxymugineic acid synthase 1-A (314 aa).

A disordered region spans residues 1–21 (MGAGDKTAAGMPRIGMGTAVQ). NADP(+) is bound at residue aspartate 44. The Proton donor role is filled by tyrosine 49. A substrate-binding site is contributed by histidine 112. Residues 158 to 159 (AN), glutamine 180, 258 to 266 (FDEARMREN), and 273 to 281 (ELTEEEHRR) contribute to the NADP(+) site.

It belongs to the aldo/keto reductase family. In terms of tissue distribution, mostly expressed in root tissues, observed in mesocotyl and embryonic roots, seedling roots, crown and seedling leafes, mature bracts, anthers, pistil, caryopsis and embryos.

The enzyme catalyses 2'-deoxymugineate + NAD(+) = 3''-deamino-3''-oxonicotianamine + NADH + H(+). The catalysed reaction is 2'-deoxymugineate + NADP(+) = 3''-deamino-3''-oxonicotianamine + NADPH + H(+). Its pathway is siderophore biosynthesis. Its function is as follows. Catalyzes the reduction of a 3''-keto intermediate during the biosynthesis of 2'-deoxymugineic acid (DMA) from L-Met. Involved in the formation of phytosiderophores (MAs) belonging to the mugineic acid family and required to acquire iron. The polypeptide is Deoxymugineic acid synthase 1-A (Triticum aestivum (Wheat)).